Reading from the N-terminus, the 803-residue chain is Leucine--tRNA ligase (803 aa).

Residues Pro40 to His51 carry the 'HIGH' region motif. Residues Lys575–Ser579 carry the 'KMSKS' region motif. Lys578 is an ATP binding site.

This sequence belongs to the class-I aminoacyl-tRNA synthetase family.

It is found in the cytoplasm. The catalysed reaction is tRNA(Leu) + L-leucine + ATP = L-leucyl-tRNA(Leu) + AMP + diphosphate. In Listeria welshimeri serovar 6b (strain ATCC 35897 / DSM 20650 / CCUG 15529 / CIP 8149 / NCTC 11857 / SLCC 5334 / V8), this protein is Leucine--tRNA ligase.